The primary structure comprises 877 residues: Translation initiation factor IF-2 (877 aa).

Residues 66 to 115 show a composition bias toward basic and acidic residues; sequence PKKESTAKKTTKKDEVKKEEKKTTTKKESKNPAKAVSEKKDEVKKEEKQP. 3 disordered regions span residues 66–127, 187–208, and 241–290; these read PKKE…LEEK, SDES…SKKE, and ENKP…KESE. Over residues 192–201 the composition is skewed to basic residues; it reads KRKKKEKKNH. Polar residues predominate over residues 245–265; it reads AQPTNKKQPNILKQSLNNSIN. Positions 376–543 constitute a tr-type G domain; the sequence is QRAPVITIMG…IVLLQADILE (168 aa). The G1 stretch occupies residues 385 to 392; it reads GHVDHGKT. Residue 385–392 coordinates GTP; it reads GHVDHGKT. The interval 410–414 is G2; sequence GITQH. A G3 region spans residues 431–434; sequence DTPG. Residues 431–435 and 485–488 contribute to the GTP site; these read DTPGH and NKMD. The segment at 485-488 is G4; the sequence is NKMD. The G5 stretch occupies residues 521–523; it reads SAK.

It belongs to the TRAFAC class translation factor GTPase superfamily. Classic translation factor GTPase family. IF-2 subfamily.

Its subcellular location is the cytoplasm. Functionally, one of the essential components for the initiation of protein synthesis. Protects formylmethionyl-tRNA from spontaneous hydrolysis and promotes its binding to the 30S ribosomal subunits. Also involved in the hydrolysis of GTP during the formation of the 70S ribosomal complex. This Campylobacter lari (strain RM2100 / D67 / ATCC BAA-1060) protein is Translation initiation factor IF-2.